A 302-amino-acid chain; its full sequence is N-acetylmuramic acid 6-phosphate etherase (302 aa).

Residues 58–221 (IGKAFLNGGR…STGAMVKTGK (164 aa)) form the SIS domain. Catalysis depends on Glu-86, which acts as the Proton donor. The active site involves Glu-117.

This sequence belongs to the GCKR-like family. MurNAc-6-P etherase subfamily. As to quaternary structure, homodimer.

It catalyses the reaction N-acetyl-D-muramate 6-phosphate + H2O = N-acetyl-D-glucosamine 6-phosphate + (R)-lactate. Its pathway is amino-sugar metabolism; N-acetylmuramate degradation. Its function is as follows. Specifically catalyzes the cleavage of the D-lactyl ether substituent of MurNAc 6-phosphate, producing GlcNAc 6-phosphate and D-lactate. This chain is N-acetylmuramic acid 6-phosphate etherase, found in Clostridium botulinum (strain Loch Maree / Type A3).